The sequence spans 391 residues: 3-ketoacyl-CoA thiolase (391 aa).

C95 serves as the catalytic Acyl-thioester intermediate. Catalysis depends on proton acceptor residues H347 and C377.

Belongs to the thiolase-like superfamily. Thiolase family. Heterotetramer of two alpha chains (FadB) and two beta chains (FadA).

Its subcellular location is the cytoplasm. The enzyme catalyses an acyl-CoA + acetyl-CoA = a 3-oxoacyl-CoA + CoA. Its pathway is lipid metabolism; fatty acid beta-oxidation. Catalyzes the final step of fatty acid oxidation in which acetyl-CoA is released and the CoA ester of a fatty acid two carbons shorter is formed. The chain is 3-ketoacyl-CoA thiolase from Pseudomonas fluorescens (strain ATCC BAA-477 / NRRL B-23932 / Pf-5).